We begin with the raw amino-acid sequence, 415 residues long: MMYEVKEFSSGKRKLEDYKSIIGEEEVSKIQEKAEKLKGRSFVHVNSTSFGGGVAEILHSLVPLLRSIGIEARWFVIEGPTEFFNVTKTFHNALQGNESLKLTEEMKELYLNVNRENSKFIDLSSFDYVLVHDPQPAALIEFYEKKSPWLWRCHIDLSSPNREFWEFLRRFVEKYDRYIFHLPEYVQPELDRNKAVIMPPSIDPLSEKNVELKQTEILRILERFDVDPEKPIITQVSRFDPWKGIFDVIEIYRKVKEKIPGVQLLLVGVMAHDDPEGWIYFEKTLRKIGEDYDVKVLTNLIGVHAREVNAFQRASDVILQMSIREGFGLTVTEAMWKGKPVIGRAVGGIKFQIVDGETGFLVRDANEAVEKVLYLLKHPEVSKEMGAKAKERVRKNFIITKHMERYLDILNSLGG.

This sequence belongs to the glycosyltransferase group 1 family. Glycosyltransferase 4 subfamily. As to quaternary structure, homodimer. Requires Mg(2+) as cofactor.

The catalysed reaction is an NDP-alpha-D-glucose + D-glucose = alpha,alpha-trehalose + a ribonucleoside 5'-diphosphate + H(+). In terms of biological role, synthesizes trehalose from ADP-, UDP- or GDP-glucose and glucose. This chain is Trehalose synthase, found in Pyrococcus horikoshii (strain ATCC 700860 / DSM 12428 / JCM 9974 / NBRC 100139 / OT-3).